A 258-amino-acid polypeptide reads, in one-letter code: Proteasome subunit alpha (258 aa).

It belongs to the peptidase T1A family. In terms of assembly, the 20S proteasome core is composed of 14 alpha and 14 beta subunits that assemble into four stacked heptameric rings, resulting in a barrel-shaped structure. The two inner rings, each composed of seven catalytic beta subunits, are sandwiched by two outer rings, each composed of seven alpha subunits. The catalytic chamber with the active sites is on the inside of the barrel. Has a gated structure, the ends of the cylinder being occluded by the N-termini of the alpha-subunits. Is capped at one or both ends by the proteasome regulatory ATPase, PAN.

The protein resides in the cytoplasm. Its activity is regulated as follows. The formation of the proteasomal ATPase PAN-20S proteasome complex, via the docking of the C-termini of PAN into the intersubunit pockets in the alpha-rings, triggers opening of the gate for substrate entry. Interconversion between the open-gate and close-gate conformations leads to a dynamic regulation of the 20S proteasome proteolysis activity. Component of the proteasome core, a large protease complex with broad specificity involved in protein degradation. This chain is Proteasome subunit alpha, found in Aeropyrum pernix (strain ATCC 700893 / DSM 11879 / JCM 9820 / NBRC 100138 / K1).